Here is a 400-residue protein sequence, read N- to C-terminus: Argininosuccinate synthase (400 aa).

8 to 16 (AYSGGLDTS) contributes to the ATP binding site. Tyr-87 contributes to the L-citrulline binding site. Gly-117 is a binding site for ATP. Positions 119, 123, and 124 each coordinate L-aspartate. An L-citrulline-binding site is contributed by Asn-123. The L-citrulline site is built by Arg-127, Ser-175, Glu-260, and Tyr-272.

It belongs to the argininosuccinate synthase family. Type 1 subfamily. As to quaternary structure, homotetramer.

It localises to the cytoplasm. The enzyme catalyses L-citrulline + L-aspartate + ATP = 2-(N(omega)-L-arginino)succinate + AMP + diphosphate + H(+). It functions in the pathway amino-acid biosynthesis; L-arginine biosynthesis; L-arginine from L-ornithine and carbamoyl phosphate: step 2/3. The protein is Argininosuccinate synthase of Mycobacterium sp. (strain KMS).